Consider the following 550-residue polypeptide: Hydroxylamine reductase (550 aa).

Residues Cys-3, Cys-6, Cys-18, and Cys-25 each contribute to the [2Fe-2S] cluster site. His-249, Glu-273, Cys-317, Cys-405, Cys-433, Cys-458, Glu-492, and Lys-494 together coordinate hybrid [4Fe-2O-2S] cluster. Cys-405 carries the post-translational modification Cysteine persulfide.

Belongs to the HCP family. The cofactor is [2Fe-2S] cluster. Hybrid [4Fe-2O-2S] cluster serves as cofactor.

The protein resides in the cytoplasm. The catalysed reaction is A + NH4(+) + H2O = hydroxylamine + AH2 + H(+). In terms of biological role, catalyzes the reduction of hydroxylamine to form NH(3) and H(2)O. This chain is Hydroxylamine reductase, found in Escherichia coli O6:H1 (strain CFT073 / ATCC 700928 / UPEC).